The following is a 190-amino-acid chain: Potassium-transporting ATPase KdpC subunit (190 aa).

The chain crosses the membrane as a helical span at residues 10 to 30 (TFLFLLLITGGVYPLLTTALG).

This sequence belongs to the KdpC family. As to quaternary structure, the system is composed of three essential subunits: KdpA, KdpB and KdpC.

Its subcellular location is the cell inner membrane. Functionally, part of the high-affinity ATP-driven potassium transport (or Kdp) system, which catalyzes the hydrolysis of ATP coupled with the electrogenic transport of potassium into the cytoplasm. This subunit acts as a catalytic chaperone that increases the ATP-binding affinity of the ATP-hydrolyzing subunit KdpB by the formation of a transient KdpB/KdpC/ATP ternary complex. This Escherichia fergusonii (strain ATCC 35469 / DSM 13698 / CCUG 18766 / IAM 14443 / JCM 21226 / LMG 7866 / NBRC 102419 / NCTC 12128 / CDC 0568-73) protein is Potassium-transporting ATPase KdpC subunit.